A 344-amino-acid polypeptide reads, in one-letter code: MMVIRPVERSDVSALMQLASKTGGGLTSLPANEATLSVRIERAIKTWQGELPKSEQGYVFVLEDSETGTVAGICAIEVAVGLNDPWYNYRVGTLVHASKELNVYNALPTLFLSNDHTGSSELCTLFLDPKWRKEGNGYLLSKSRFMFMAAFRDKFNDKVVAEMRGVIDEHGYSPFWQSLGKRFFSMDFSRADFLCGTGQKAFIAELMPKHPIYTHFLSQEAQDVIGQVHPQTAPARAVLEKEGFRYRNYIDIFDGGPTLECDIDRVRAIRKSRLVEVAEGQPAQGDFPACLVANENYHHFRVVLVRTDPATERLILTAAQLDALKCHAGDRVRLVRLCAEEKTA.

Leu125 lines the succinyl-CoA pocket. The Proton donor role is filled by His229.

Belongs to the arginine N-succinyltransferase family.

The enzyme catalyses succinyl-CoA + L-arginine = N(2)-succinyl-L-arginine + CoA + H(+). It functions in the pathway amino-acid degradation; L-arginine degradation via AST pathway; L-glutamate and succinate from L-arginine: step 1/5. Functionally, catalyzes the transfer of succinyl-CoA to arginine to produce N(2)-succinylarginine. This chain is Arginine N-succinyltransferase, found in Escherichia coli O6:H1 (strain CFT073 / ATCC 700928 / UPEC).